Reading from the N-terminus, the 451-residue chain is MNNPIAAIVLAAGKGTRMKSDLHKVLHPIAGRPMLLHLMASVDELSPAKKVVVVGDKADQLEAALSGTAELAVQEPQLGTGHAVRQAEAALSGFDGDVLILYGDVPFVPAATMRAMLDRLGASDAPAVVVLAFEPADPLQYGRVITDGDRVVKMVEHKDATDAERAVRLCNSGLMAARARDLFALLARVTDDNAAKEFYLVDIVNIANADGRLCAVVKTDPADVGGINSRAELAAAEAQWQAFRREEAMAAGASLRAPETVWFSWDTQLGRDVTIEPNVVFGPGVKIADGATIRAFSHIEGATIGAGCEVGPFARLRPGTVLGEKAKIGNFVEVKKAVLGAGAKANHLTYLGDATVGAGANIGAGTITCNYDGYFKHQTQIGERAFIGSNSALVAPVKIGADAIVAAGSTVTLDVGDGELRIVRGEQLVKPGWADRFHDAMRKKKAAEQKK.

Residues 1 to 230 form a pyrophosphorylase region; the sequence is MNNPIAAIVL…PADVGGINSR (230 aa). UDP-N-acetyl-alpha-D-glucosamine-binding positions include 10 to 13, K24, Q74, 79 to 80, 102 to 104, G142, E156, N171, and N228; these read LAAG, GT, and YGD. D104 lines the Mg(2+) pocket. N228 contacts Mg(2+). Residues 231-251 form a linker region; the sequence is AELAAAEAQWQAFRREEAMAA. The tract at residues 252 to 451 is N-acetyltransferase; it reads GASLRAPETV…RKKKAAEQKK (200 aa). 2 residues coordinate UDP-N-acetyl-alpha-D-glucosamine: R317 and K335. Residue H347 is the Proton acceptor of the active site. Residues Y350 and N361 each coordinate UDP-N-acetyl-alpha-D-glucosamine. Acetyl-CoA-binding positions include A364, 370–371, S389, A407, and R424; that span reads NY.

In the N-terminal section; belongs to the N-acetylglucosamine-1-phosphate uridyltransferase family. It in the C-terminal section; belongs to the transferase hexapeptide repeat family. Homotrimer. Mg(2+) is required as a cofactor.

The protein localises to the cytoplasm. The catalysed reaction is alpha-D-glucosamine 1-phosphate + acetyl-CoA = N-acetyl-alpha-D-glucosamine 1-phosphate + CoA + H(+). It carries out the reaction N-acetyl-alpha-D-glucosamine 1-phosphate + UTP + H(+) = UDP-N-acetyl-alpha-D-glucosamine + diphosphate. It participates in nucleotide-sugar biosynthesis; UDP-N-acetyl-alpha-D-glucosamine biosynthesis; N-acetyl-alpha-D-glucosamine 1-phosphate from alpha-D-glucosamine 6-phosphate (route II): step 2/2. It functions in the pathway nucleotide-sugar biosynthesis; UDP-N-acetyl-alpha-D-glucosamine biosynthesis; UDP-N-acetyl-alpha-D-glucosamine from N-acetyl-alpha-D-glucosamine 1-phosphate: step 1/1. The protein operates within bacterial outer membrane biogenesis; LPS lipid A biosynthesis. Catalyzes the last two sequential reactions in the de novo biosynthetic pathway for UDP-N-acetylglucosamine (UDP-GlcNAc). The C-terminal domain catalyzes the transfer of acetyl group from acetyl coenzyme A to glucosamine-1-phosphate (GlcN-1-P) to produce N-acetylglucosamine-1-phosphate (GlcNAc-1-P), which is converted into UDP-GlcNAc by the transfer of uridine 5-monophosphate (from uridine 5-triphosphate), a reaction catalyzed by the N-terminal domain. The chain is Bifunctional protein GlmU from Sphingopyxis alaskensis (strain DSM 13593 / LMG 18877 / RB2256) (Sphingomonas alaskensis).